A 481-amino-acid polypeptide reads, in one-letter code: 2-succinylbenzoate--CoA ligase (481 aa).

It belongs to the ATP-dependent AMP-binding enzyme family. MenE subfamily.

It catalyses the reaction 2-succinylbenzoate + ATP + CoA = 2-succinylbenzoyl-CoA + AMP + diphosphate. It participates in quinol/quinone metabolism; 1,4-dihydroxy-2-naphthoate biosynthesis; 1,4-dihydroxy-2-naphthoate from chorismate: step 5/7. It functions in the pathway quinol/quinone metabolism; menaquinone biosynthesis. Converts 2-succinylbenzoate (OSB) to 2-succinylbenzoyl-CoA (OSB-CoA). In Bacillus cytotoxicus (strain DSM 22905 / CIP 110041 / 391-98 / NVH 391-98), this protein is 2-succinylbenzoate--CoA ligase.